The primary structure comprises 125 residues: Small ribosomal subunit protein bS6 (125 aa).

The segment at 99-125 (ASPMVKAREERKPLTEVENNDFEDAEE) is disordered. The span at 104-113 (KAREERKPLT) shows a compositional bias: basic and acidic residues. A compositionally biased stretch (acidic residues) spans 116-125 (ENNDFEDAEE).

The protein belongs to the bacterial ribosomal protein bS6 family.

Functionally, binds together with bS18 to 16S ribosomal RNA. The polypeptide is Small ribosomal subunit protein bS6 (Histophilus somni (strain 2336) (Haemophilus somnus)).